The sequence spans 340 residues: Guanine nucleotide-binding protein G(I)/G(S)/G(T) subunit beta-1 (340 aa).

N-acetylserine is present on Ser2. Phosphoserine is present on Ser2. WD repeat units follow at residues 46-94 (RTRR…HAIP), 95-140 (LRSS…RELA), 141-181 (GHTG…TTFT), 182-223 (GHTG…QTFT), 224-267 (GHES…YSHD), 268-309 (NIIC…GVLA), and 310-340 (GHDNRVSCLGVTDDGMAVATGSWDSFLKIWN). His266 carries the post-translational modification Phosphohistidine.

Belongs to the WD repeat G protein beta family. In terms of assembly, g proteins are composed of 3 units, alpha, beta and gamma. The heterodimer formed by GNB1 and GNG2 interacts with ARHGEF5. The heterodimer formed by GNB1 and GNG2 interacts with GRK2. Forms a complex with GNAO1 and GNG3. Interacts with ARHGEF18 and RASD2. Forms complexes with TAS2R14 and G-proteins; these complexes play a role in the perception of bitterness. Component of the TAS2R14-GNAI1 complex, consisting of TAS2R14, GNAI1, GNB1 and GNG2. Component of the TAS2R14-GNAT3 complex, consisting of TAS2R14, GNAT3, GNB1 and GNG2. Component of the TAS2R14-GNAS2 complex, consisting of TAS2R14, GNAS2, GNB1 and GNG2. Phosphorylation at His-266 by NDKB contributes to G protein activation by increasing the high energetic phosphate transfer onto GDP.

Its function is as follows. Guanine nucleotide-binding proteins (G proteins) are involved as a modulator or transducer in various transmembrane signaling systems. The beta and gamma chains are required for the GTPase activity, for replacement of GDP by GTP, and for G protein-effector interaction. The polypeptide is Guanine nucleotide-binding protein G(I)/G(S)/G(T) subunit beta-1 (GNB1) (Cricetulus griseus (Chinese hamster)).